The primary structure comprises 833 residues: MLGFLFKKVFGSKNDRYIKRLRPIVAAINALEPQMQSLRDEDFPVRIAEYRQQVEEGRKLDDMLPEVFALVREAGKRVFNMRHFDVQLVGGMALHHGKIAEMKTGEGKTLVATLPVVLNALTGKGVHVVTVNDYLAKRDAAWMGQLYNFLGLSVGVIVHGLDDEQRKAAYGADITYGTNNEFGFDYLRDNMKFYAEQLVQRGHNFAIVDEVDSILIDEARTPLIISGASEESTGLYRHMDEIVRKLTRDTHFTVDEKARTAMLTDEGVAFCETLVGIDNLYDPGNITTQHHLMQALKAHNLFRRDVDYIVKEGQVVIVDEFTGRLMPGRRFSDGLHQALEAKEAVKIEAENQTLASITFQNYFRMYAKLAGMTGTADTEAVEFHQIYSLEVVSIPTNKPMQRKDFADAIYRTKREKYDAIAQAIAELHKAGQPVLVGTISIETSELLSTMLKKTGVPHSVLNAKHHEKEAEIVALAGQRGHVTIATNMAGRGTDIVLGEGVRELGGLHILGTERHESRRIDNQLRGRSGRQGDPGSSRFYLSLEDDLMRLFGSERISGLMEKLGMEEGEPIEARMVSRAIENAQKRVEGHNFEIRKTLLDYDNVMNQQREVIYTLRRDAMSAPDLGPTMEEFLDDVLEDVYAPAEGGEAPSADTVAAVWGRLADVCNITRVMQPAPALPTRDEARAAVLSILHELREDTGESYRDIIRYFMLEELDRCWKEHLRNMDHLRDGIGLRGYGQRDPKLEYKREGFAMFQEMLFRIKEGVFRSLTRLRVQRVEEEAFRHKEQPAAVAYSGGEAEAGPAQPHREDPKVGRNDLCPCGSGRKYKKCCGA.

ATP contacts are provided by residues Q87, 105–109, and D494; that span reads GEGKT. Positions 789–816 are disordered; that stretch reads PAAVAYSGGEAEAGPAQPHREDPKVGRN. Positions 806-815 are enriched in basic and acidic residues; it reads PHREDPKVGR. The Zn(2+) site is built by C819, C821, C830, and C831.

It belongs to the SecA family. Monomer and homodimer. Part of the essential Sec protein translocation apparatus which comprises SecA, SecYEG and auxiliary proteins SecDF-YajC and YidC. Requires Zn(2+) as cofactor.

The protein resides in the cell inner membrane. It is found in the cytoplasm. The catalysed reaction is ATP + H2O + cellular proteinSide 1 = ADP + phosphate + cellular proteinSide 2.. Its function is as follows. Part of the Sec protein translocase complex. Interacts with the SecYEG preprotein conducting channel. Has a central role in coupling the hydrolysis of ATP to the transfer of proteins into and across the cell membrane, serving as an ATP-driven molecular motor driving the stepwise translocation of polypeptide chains across the membrane. The polypeptide is Protein translocase subunit SecA (Nitratidesulfovibrio vulgaris (strain DP4) (Desulfovibrio vulgaris)).